Here is a 139-residue protein sequence, read N- to C-terminus: Translation initiation factor 2 subunit beta (139 aa).

This sequence belongs to the eIF-2-beta/eIF-5 family. As to quaternary structure, heterotrimer composed of an alpha, a beta and a gamma chain.

Its function is as follows. eIF-2 functions in the early steps of protein synthesis by forming a ternary complex with GTP and initiator tRNA. This is Translation initiation factor 2 subunit beta from Sulfurisphaera tokodaii (strain DSM 16993 / JCM 10545 / NBRC 100140 / 7) (Sulfolobus tokodaii).